The chain runs to 527 residues: Rhesus-like glycoprotein A (527 aa).

The Cytoplasmic portion of the chain corresponds to Met-1–Pro-18. A helical transmembrane segment spans residues Ile-19 to Leu-39. Over Thr-40–Tyr-70 the chain is Extracellular. An N-linked (GlcNAc...) asparagine glycan is attached at Asn-47. A helical transmembrane segment spans residues Gly-71–Leu-91. Topologically, residues Arg-92–Leu-99 are cytoplasmic. The helical transmembrane segment at Gly-100 to Phe-120 threads the bilayer. Residues Glu-121–Asp-141 lie on the Extracellular side of the membrane. Residues Ser-142–Gly-162 traverse the membrane as a helical segment. Residues Arg-163–Pro-166 are Cytoplasmic-facing. Residues Leu-167–Gly-187 traverse the membrane as a helical segment. Residues Glu-188–Asp-195 are Extracellular-facing. A helical membrane pass occupies residues Val-196 to Phe-216. At Leu-217–Asn-236 the chain is on the cytoplasmic side. A helical transmembrane segment spans residues Phe-237–Ala-257. Residues Pro-258–Gln-263 are Extracellular-facing. Residues Phe-264–Val-284 form a helical membrane-spanning segment. Topologically, residues Ser-285–His-299 are cytoplasmic. A helical transmembrane segment spans residues Val-300–Ile-319. Residues Asn-320–Pro-321 are Extracellular-facing. A helical transmembrane segment spans residues Gly-322–Ile-342. At Thr-343 to Gly-357 the chain is on the cytoplasmic side. A helical transmembrane segment spans residues Ile-358–Ile-378. The Extracellular segment spans residues Lys-379 to Asn-406. The helical transmembrane segment at Leu-407–Ile-427 threads the bilayer. The Cytoplasmic portion of the chain corresponds to Leu-428–Ile-527. A disordered region spans residues Ser-471–Ile-527. The span at Gly-483–Lys-495 shows a compositional bias: basic and acidic residues. Positions Ser-514–Ile-527 are enriched in acidic residues.

The protein belongs to the ammonium transporter (TC 2.A.49) family. Rh subfamily. In terms of assembly, interacts with ap1g1.

It is found in the contractile vacuole. It localises to the membrane. Functionally, may be a carbon dioxide/bicarbonate transporter. The sequence is that of Rhesus-like glycoprotein A (rhgA) from Dictyostelium discoideum (Social amoeba).